We begin with the raw amino-acid sequence, 110 residues long: Nucleoid-associated protein Sfri_2406 (110 aa).

The protein belongs to the YbaB/EbfC family. Homodimer.

The protein localises to the cytoplasm. It is found in the nucleoid. In terms of biological role, binds to DNA and alters its conformation. May be involved in regulation of gene expression, nucleoid organization and DNA protection. This Shewanella frigidimarina (strain NCIMB 400) protein is Nucleoid-associated protein Sfri_2406.